We begin with the raw amino-acid sequence, 400 residues long: Flavo-diiron protein FprA2 (400 aa).

The tract at residues 32–216 is zinc metallo-hydrolase; the sequence is GTSYNAYLIK…VVKGLDILDA (185 aa). H79, E81, D83, H147, D166, and H226 together coordinate Fe cation. One can recognise a Flavodoxin-like domain in the interval 257-397; it reads IPIFYCSAYG…KAFKFGEDFA (141 aa). FMN is bound by residues 263–267 and 345–372; these read SAYGN and AFGS…KVFQ.

It in the N-terminal section; belongs to the zinc metallo-hydrolase group 3 family. In terms of assembly, homotetramer. Requires FMN as cofactor. It depends on Fe cation as a cofactor.

The enzyme catalyses 2 NADH + O2 + 2 H(+) = 2 NAD(+) + 2 H2O. Catalyzes the four-electron reduction of molecular oxygen to water. In fact, functions as the terminal component of an NADH oxidase (NADH:O(2) oxidoreductase) when using NADH:rubredoxin oxidoreductase (NROR) and rubredoxin (Rd) as electron transport intermediaries between NADH and FDP. Is thus able to reductively scavenge intracellular dioxygen and is part of an oxidative stress defense system in C.acetobutylicum, an obligate anaerobic bacterium. Can also serve as the terminal component of an NADH:nitric oxide oxidoreductase (NOR) with a catalytic efficiency comparable to that of its NADH oxidase activity, and therefore might have an in vivo role in scavenging nitric oxide. The polypeptide is Flavo-diiron protein FprA2 (fprA2) (Clostridium acetobutylicum (strain ATCC 824 / DSM 792 / JCM 1419 / IAM 19013 / LMG 5710 / NBRC 13948 / NRRL B-527 / VKM B-1787 / 2291 / W)).